A 127-amino-acid chain; its full sequence is Small ribosomal subunit protein uS11 (127 aa).

It belongs to the universal ribosomal protein uS11 family. As to quaternary structure, part of the 30S ribosomal subunit. Interacts with proteins S7 and S18. Binds to IF-3.

Functionally, located on the platform of the 30S subunit, it bridges several disparate RNA helices of the 16S rRNA. Forms part of the Shine-Dalgarno cleft in the 70S ribosome. The sequence is that of Small ribosomal subunit protein uS11 from Rickettsia africae (strain ESF-5).